The sequence spans 575 residues: MDDEDDFFNFLSEKPTDKEQSMLDDIFKMGNDTEDIFSRLNEFLSNDINLTPNNEETYTNRFNYDASVSLLDNVGRAASFNTYYRDGQEFRSHLHGQVMDDESEHIVASLEEECYKRGNKYFVSDFIYYDTETNSWTPKREELSKIGLEKDIKADVICVDKIKVWTGPRSEHLMSIQNATNSLSGYEKRDSMNKPPKGMFLHEVVKFGDLMGTMARYKRTDNTQSSHPFSENNRTNRTNVNMARGIHEFTLLNRIMMAHNIANNPYGGSSTLISRDSENNNSLTVDSVINSVINGITFKAEACKKEKKGEKKGFSLTQMASFGTHKSVVNFNEQDLEEIANMTEEELALAPLEGAEVQVHEACFNCSAVRGSRILPDMKRKGCQLLEDTKESITSLAVNNGKAKIMKMSNSLAWNSLNTLIDMMCWEANTHKMTREEEMEFFNTEITPALNGLHVSRDNYAQASSFTQQIPKNKFLAEPDIKSVSHKHKSVRTRNIFGQTNIKFKTAHRKVGELNNKKPMTGEKPPPKNKKSPKYKNNTFASQWARNMGIVRFLEFGPRVCRNRCDFREPTEEEI.

The interval 507 to 536 (AHRKVGELNNKKPMTGEKPPPKNKKSPKYK) is disordered.

This is an uncharacterized protein from Ostreid herpesvirus 1 (isolate France) (OsHV-1).